A 158-amino-acid polypeptide reads, in one-letter code: MKFGCLSFRQPYAGFVLNGVKTVETRWRPLLSSQRNCTIAIHIAHRDWEGDAWWELLVERFGMTPAQIQALLREGEKFGRGVIAGLVDIGETLQCPEDLTPDEVVELENQAVLTNLKQKYLTVISNPRWLLEPIPRKGGRDVFQVDIPEHLIPLGHEV.

The region spanning 6–92 (LSFRQPYAGF…IAGLVDIGET (87 aa)) is the ASCH domain.

The protein belongs to the EOLA family.

The sequence is that of EOLA-like protein from Pongo abelii (Sumatran orangutan).